Here is a 137-residue protein sequence, read N- to C-terminus: Bombinin-like peptides 2 (137 aa).

The signal sequence occupies residues Met1 to Ala18. An Asparagine amide modification is found at Asn70. A disordered region spans residues Asp92–Glu112. Position 136 is an isoleucine amide (Ile136).

It belongs to the bombinin family. Expressed by the skin glands.

Its subcellular location is the secreted. Its function is as follows. Bombinin-like peptide 2 has antimicrobial activity, but no hemolytic activity. Preliminary evidence indicates that this peptide does not lyse and thus kill the bacteria by its antimicrobial activity. In terms of biological role, bombinin H2 has antibacterial and hemolytic activity. In Bombina variegata (Yellow-bellied toad), this protein is Bombinin-like peptides 2.